A 179-amino-acid polypeptide reads, in one-letter code: Translation initiation factor IF-3 (179 aa).

The protein belongs to the IF-3 family. In terms of assembly, monomer.

Its subcellular location is the cytoplasm. Functionally, IF-3 binds to the 30S ribosomal subunit and shifts the equilibrium between 70S ribosomes and their 50S and 30S subunits in favor of the free subunits, thus enhancing the availability of 30S subunits on which protein synthesis initiation begins. The chain is Translation initiation factor IF-3 from Leptospira borgpetersenii serovar Hardjo-bovis (strain L550).